A 372-amino-acid polypeptide reads, in one-letter code: Carbamoyl phosphate synthase small chain (372 aa).

Residues 1–186 (MTYCKRGTEG…IHQNNSPDII (186 aa)) form a CPSase region. 3 residues coordinate L-glutamine: Ser-52, Gly-233, and Gly-235. The Glutamine amidotransferase type-1 domain occupies 185 to 372 (IIVLVDCGIK…KKMVIKDEGN (188 aa)). The Nucleophile role is filled by Cys-261. Leu-262, Gln-265, Asn-303, Gly-305, and Tyr-306 together coordinate L-glutamine. Residues His-345 and Glu-347 contribute to the active site.

This sequence belongs to the CarA family. Composed of two chains; the small (or glutamine) chain promotes the hydrolysis of glutamine to ammonia, which is used by the large (or ammonia) chain to synthesize carbamoyl phosphate. Tetramer of heterodimers (alpha,beta)4.

The catalysed reaction is hydrogencarbonate + L-glutamine + 2 ATP + H2O = carbamoyl phosphate + L-glutamate + 2 ADP + phosphate + 2 H(+). It carries out the reaction L-glutamine + H2O = L-glutamate + NH4(+). It functions in the pathway amino-acid biosynthesis; L-arginine biosynthesis; carbamoyl phosphate from bicarbonate: step 1/1. The protein operates within pyrimidine metabolism; UMP biosynthesis via de novo pathway; (S)-dihydroorotate from bicarbonate: step 1/3. In terms of biological role, small subunit of the glutamine-dependent carbamoyl phosphate synthetase (CPSase). CPSase catalyzes the formation of carbamoyl phosphate from the ammonia moiety of glutamine, carbonate, and phosphate donated by ATP, constituting the first step of 2 biosynthetic pathways, one leading to arginine and/or urea and the other to pyrimidine nucleotides. The small subunit (glutamine amidotransferase) binds and cleaves glutamine to supply the large subunit with the substrate ammonia. The sequence is that of Carbamoyl phosphate synthase small chain from Metallosphaera sedula (strain ATCC 51363 / DSM 5348 / JCM 9185 / NBRC 15509 / TH2).